Reading from the N-terminus, the 396-residue chain is Gap junction gamma-1 protein (396 aa).

Residues 1–22 (MSWSFLTRLLEEIHNHSTFVGK) lie on the Cytoplasmic side of the membrane. The chain crosses the membrane as a helical span at residues 23-45 (IWLTVLIAFRIALTAVGGESIYY). Residues 46-75 (DEQSKFVCNTEQPGCENVCYDAFAPLSHVR) are Extracellular-facing. The chain crosses the membrane as a helical span at residues 76-95 (FWVFQIILVATPSVMYLGYA). The Cytoplasmic portion of the chain corresponds to 96 to 175 (IHKIAKMEHG…RRIREDGLMK (80 aa)). Positions 145–165 (ELESEKENKEQNQPKPKHDGR) are disordered. The segment covering 147 to 156 (ESEKENKEQN) has biased composition (basic and acidic residues). The helical transmembrane segment at 176–198 (IYVLQLLARTVFEVGFLIGQYFL) threads the bilayer. At 199–228 (YGFQVHPFYVCSRLPCPHKIDCFISRPTEK) the chain is on the extracellular side. Residues 229–248 (TIFLLIMYGVTGLCLLLNIW) form a helical membrane-spanning segment. Residues 249–396 (EMLHLGFGTI…SGDGKNSVWI (148 aa)) are Cytoplasmic-facing. The segment at 355 to 396 (AYSHQNNPHGPREKKAKVGSKAGSNKSSASSKSGDGKNSVWI) is disordered. Over residues 373–396 (GSKAGSNKSSASSKSGDGKNSVWI) the composition is skewed to low complexity.

It belongs to the connexin family. Gamma-type subfamily. A connexon is composed of a hexamer of connexins. Interacts with CNST.

The protein localises to the cell membrane. It localises to the cell junction. Its subcellular location is the gap junction. Its function is as follows. One gap junction consists of a cluster of closely packed pairs of transmembrane channels, the connexons, through which materials of low MW diffuse from one cell to a neighboring cell. In Canis lupus familiaris (Dog), this protein is Gap junction gamma-1 protein (GJC1).